The primary structure comprises 104 residues: Large ribosomal subunit protein uL24 (104 aa).

The protein belongs to the universal ribosomal protein uL24 family. In terms of assembly, part of the 50S ribosomal subunit.

In terms of biological role, one of two assembly initiator proteins, it binds directly to the 5'-end of the 23S rRNA, where it nucleates assembly of the 50S subunit. Functionally, one of the proteins that surrounds the polypeptide exit tunnel on the outside of the subunit. In Neorickettsia sennetsu (strain ATCC VR-367 / Miyayama) (Ehrlichia sennetsu), this protein is Large ribosomal subunit protein uL24.